The chain runs to 1119 residues: DISARM protein DrmA (1119 aa).

Residues 73–95 form a disordered region; that stretch reads PESGMEEDVEQQRNSELEQEAEE. The Helicase C-terminal domain occupies 813 to 986; the sequence is ELSKYIDPYR…ATPYASRARD (174 aa).

The protein belongs to the helicase family.

It is found in the cytoplasm. Its function is as follows. Component of antiviral defense system DISARM (defense island system associated with restriction-modification), composed of DrmE, DrmA, DrmB, DrmC and DrmMII. DISARM is probably a multi-gene restriction module, this subunit is probably a helicase. Expression of DISARM in B.subtilis (strain BEST7003) confers resistance to phages Nf, phi29, phi105, phi3T, SPO1, SPR and SPP1. Protection is over 10(7)-fold against phi3T, 10(4)-10(5)-fold against Nf, phi29, phi105 and SPR, 100-fold against SPO1 and 10-fold against SPP1. DISARM does not interfere with phage adsorption, but instead interferes with (phi3T) DNA replication early in its cycle, preventing replication, circularization and lysogeny and probably causes phage DNA degradation (DNA is degraded in SPP1-infected cells). In Bacillus paralicheniformis (strain ATCC 9945a / NCIMB 11709 / CD-2), this protein is DISARM protein DrmA.